Consider the following 790-residue polypeptide: MAKKVLLLSLYSAVLSTWFGFGYVQCKLPTSRSEIPNFDYTVAQQPDQSDACEQNEVCMVSVECILDAKKKAILKPCSTVPSVDGVCCPSSEYNGTSSRVQQNSEEHAADHLVLQAIHEGRREYDEKLRFEDEHRAVMTAKEKPEAMFHRMFLPGGLKTHGKEVVDAEEQANVYGHVFASRKYAELTNMTLKQRQGDRFARIPRAIRKRCLPPVPCNPHSRYRTIDGSCNNPLPDRTSWGMEGYPFDRVLEPAYEDGVWAPRIHSVTGNLLPSARVISVALFPDEYRPDPRLNILFMQMGQFISHDFTLSRGFTTKHGQAIECCTPNCTAPLFGPHRHFACFPIEVPPNDPFYSRFGVRCLNLVRIRLAQGPECQLGYAKQADLVTHFLDASTVYGSTNDVAAELRAFQQGRLKDSFPNGIELLPFARNRTACVPWARVCYEGGDIRTNQLLGLTMVHTLFMREHNRLAVGLSKINPHWDDERLYQEARRILIAEYQNVVYNEFLPILLGHERVQQLGLADPFDTYTNYYDPNLRPMTLAEVGAAAHRYGHSLVEGFFRFLTRESPPEDVFIKDIFNDPSKTLEPNSFDVMMFSFNQQPMEQMDRFLTYGLTRFLFKERKPFGSDLASLNIQRGRDFAVRPYNDYREWAGLGRITDFNQLGEVGALLAQVYESPDDVDLWPGGVLEPPAEGAVVGSTFVALLSAGYTRYKRADRYYFTNGPEVNPGAFTLQQLGEIRRTTLAGIICANADHKEDFYQAQEALRQSSADNVPVPCTRYDTVNLGLWREEGF.

Positions 1-16 (MAKKVLLLSLYSAVLS) are cleaved as a signal peptide. Residues 17 to 209 (TWFGFGYVQC…ARIPRAIRKR (193 aa)) constitute a propeptide that is removed on maturation. Position 210 is an N-acetylcysteine; in Chorion peroxidase light chain (Cys-210). Cys-216 and Cys-229 form a disulfide bridge. Trp-259 carries an N-linked (Man) tryptophan glycan. His-305 acts as the Proton acceptor in catalysis. N-linked (GlcNAc...) asparagine glycosylation occurs at Asn-327. Position 353 is a 3',4'-dihydroxyphenylalanine (Tyr-353). Cys-433 and Cys-440 are oxidised to a cystine. Trp-479 is a glycosylation site (N-linked (Man) tryptophan). His-551 lines the heme b pocket. Trp-680 carries an N-linked (Man) tryptophan glycan. Cys-746 and Cys-774 are joined by a disulfide. N-linked (Man) tryptophan glycosylation occurs at Trp-785.

Belongs to the peroxidase family. XPO subfamily. Heterodimer. Requires heme b as cofactor. In terms of processing, N-glycosylated on Trp by mannose and on Asn by N-acetylglucosamine. There is a hexose glycosylation of an unidentified residue between 654 and 708; Trp-680 is conserved in closely related species and is probably mannosylated.

The protein resides in the secreted. The enzyme catalyses 2 a phenolic donor + H2O2 = 2 a phenolic radical donor + 2 H2O. Extremely resistant to denaturating agents, such as SDS and organic solvents. Involved in the formation of a rigid and insoluble egg chorion by catalyzing chorion protein cross-linking through dityrosine formation and phenol oxidase-catalyzed chorion melanization. This is Chorion peroxidase (pxt) from Aedes aegypti (Yellowfever mosquito).